Here is a 263-residue protein sequence, read N- to C-terminus: Urease accessory protein UreD 1 (263 aa).

Belongs to the UreD family. UreD, UreF and UreG form a complex that acts as a GTP-hydrolysis-dependent molecular chaperone, activating the urease apoprotein by helping to assemble the nickel containing metallocenter of UreC. The UreE protein probably delivers the nickel.

It localises to the cytoplasm. Functionally, required for maturation of urease via the functional incorporation of the urease nickel metallocenter. This is Urease accessory protein UreD 1 from Synechococcus sp. (strain JA-3-3Ab) (Cyanobacteria bacterium Yellowstone A-Prime).